Consider the following 493-residue polypeptide: MSALGVSVALLVWVAVLLLVSIWRQVHSSWNLPPGPFPLPIIGNLFQLELKNIPKSFTRLAQRFGPVFTLYVGSRRVVVVHGYKAVREVLLDHKDEFSGRGDIPAFHAHRDRGIIFNNGPTWKDIRRFSLTTLRNYGMGKQGNESRIQREAHFLLEALRKTQGQPFDPTFLIGCAPCNVIADILFRKHFDYNDEKFLRLMYLFNENFQLLSTPWLQLYNNFPSLLHYLPGSHRKVMKNVAEIKEYVSERVKEHLQSLDPNCPRDLTDCLLVEMEKEKHSAERLYTMDGITVTVADLFFAGTETTSTTLRYGLLILMKYPEIEEKLHEEIDRVIGPSRIPAIKDRQEMPYMDAVVHEIQRFITLVPSNLPHEATRDTIFRGYIIPKGTVIVPTLDSVLYDNQEFPDPEKFKPEHFLDESGKFKYSDYFKPFSAGKRVCAGEGLARMELFLLLSAILQHFNLKPLVDPKDIDISPVNIGFGCIPPRFKLCVIPRS.

Residue 298-303 (FAGTET) participates in substrate binding. C437 contributes to the heme binding site.

It belongs to the cytochrome P450 family. As to quaternary structure, interacts with chaperones HSP70 and HSP90; this interaction is required for initial targeting to mitochondria. The cofactor is heme.

The protein resides in the endoplasmic reticulum membrane. Its subcellular location is the microsome membrane. It localises to the mitochondrion inner membrane. The enzyme catalyses an organic molecule + reduced [NADPH--hemoprotein reductase] + O2 = an alcohol + oxidized [NADPH--hemoprotein reductase] + H2O + H(+). It catalyses the reaction (5Z,8Z,11Z)-eicosatrienoate + reduced [NADPH--hemoprotein reductase] + O2 = 19-hydroxy-(5Z,8Z,11Z)-eicosatrienoate + oxidized [NADPH--hemoprotein reductase] + H2O + H(+). It carries out the reaction (5Z,8Z,11Z,14Z,17Z)-eicosapentaenoate + reduced [NADPH--hemoprotein reductase] + O2 = 19-hydroxy-(5Z,8Z,11Z,14Z,17Z)-eicosapentaenoate + oxidized [NADPH--hemoprotein reductase] + H2O + H(+). The catalysed reaction is (4Z,7Z,10Z,13Z,16Z,19Z)-docosahexaenoate + reduced [NADPH--hemoprotein reductase] + O2 = 21-hydroxy-(4Z,7Z,10Z,13Z,16Z,19Z)-docosahexaenoate + oxidized [NADPH--hemoprotein reductase] + H2O + H(+). The enzyme catalyses dodecanoate + reduced [NADPH--hemoprotein reductase] + O2 = 11-hydroxydodecanoate + oxidized [NADPH--hemoprotein reductase] + H2O + H(+). It catalyses the reaction tetradecanoate + reduced [NADPH--hemoprotein reductase] + O2 = 13-hydroxytetradecanoate + oxidized [NADPH--hemoprotein reductase] + H2O + H(+). It carries out the reaction 4-nitrophenol + NADPH + O2 + H(+) = 4-nitrocatechol + NADP(+) + H2O. It participates in lipid metabolism; fatty acid metabolism. The omega-1 hydroxylase activity is stimulated by cytochrome b5. A cytochrome P450 monooxygenase involved in the metabolism of fatty acids. Mechanistically, uses molecular oxygen inserting one oxygen atom into a substrate, and reducing the second into a water molecule, with two electrons provided by NADPH via cytochrome P450 reductase (NADPH--hemoprotein reductase). Catalyzes the hydroxylation of carbon-hydrogen bonds. Hydroxylates fatty acids specifically at the omega-1 position displaying the highest catalytic activity for saturated fatty acids. May be involved in the oxidative metabolism of xenobiotics. This Macaca mulatta (Rhesus macaque) protein is Cytochrome P450 2E1 (CYP2E1).